Reading from the N-terminus, the 148-residue chain is Hemoglobin subunit beta (148 aa).

The region spanning 3-148 (XWTDXERAAI…VVSALGRQYH (146 aa)) is the Globin domain. Positions 64 and 93 each coordinate heme b.

It belongs to the globin family. In terms of assembly, heterotetramer of two alpha chains and two beta chains. Red blood cells.

Its function is as follows. Involved in oxygen transport from gills to the various peripheral tissues. The protein is Hemoglobin subunit beta (hbb) of Decapterus maruadsi (Japanese scad).